The chain runs to 509 residues: uncharacterized protein (509 aa).

It localises to the virion. This is an uncharacterized protein from Acanthamoeba polyphaga mimivirus (APMV).